The following is a 157-amino-acid chain: MGFPKVERLLINYKTLDEFKKFKGCGAQELSMLEELQANIIENDSESPFYGIYYGGSLIARMSLYMKRNGGEPFEITGPYLELYKLEVLPTFQKQGFGQMLVNHAKQMQFPIKTIARIHSAGFWDKLNFNPVSVTDGDFYIWHPETNLNAVTNEESA.

Positions 9–154 constitute an N-acetyltransferase domain; the sequence is LLINYKTLDE…ETNLNAVTNE (146 aa).

This is an uncharacterized protein from Bacillus cereus (strain ATCC 14579 / DSM 31 / CCUG 7414 / JCM 2152 / NBRC 15305 / NCIMB 9373 / NCTC 2599 / NRRL B-3711).